A 335-amino-acid chain; its full sequence is DNA-directed RNA polymerase subunit alpha (335 aa).

An alpha N-terminal domain (alpha-NTD) region spans residues 1–233; sequence MVREKITVST…DLFIPFLHME (233 aa). The tract at residues 265–335 is alpha C-terminal domain (alpha-CTD); sequence KEIALKSIFI…KQLVIFLPKK (71 aa).

This sequence belongs to the RNA polymerase alpha chain family. In plastids the minimal PEP RNA polymerase catalytic core is composed of four subunits: alpha, beta, beta', and beta''. When a (nuclear-encoded) sigma factor is associated with the core the holoenzyme is formed, which can initiate transcription.

It localises to the plastid. The protein resides in the chloroplast. The enzyme catalyses RNA(n) + a ribonucleoside 5'-triphosphate = RNA(n+1) + diphosphate. In terms of biological role, DNA-dependent RNA polymerase catalyzes the transcription of DNA into RNA using the four ribonucleoside triphosphates as substrates. In Coffea arabica (Arabian coffee), this protein is DNA-directed RNA polymerase subunit alpha.